We begin with the raw amino-acid sequence, 85 residues long: Cell division topological specificity factor (85 aa).

The protein belongs to the MinE family.

Its function is as follows. Prevents the cell division inhibition by proteins MinC and MinD at internal division sites while permitting inhibition at polar sites. This ensures cell division at the proper site by restricting the formation of a division septum at the midpoint of the long axis of the cell. This Dechloromonas aromatica (strain RCB) protein is Cell division topological specificity factor.